The following is a 548-amino-acid chain: Putative malate oxidoreductase [NAD] (548 aa).

The Proton donor role is filled by tyrosine 96. Lysine 169 functions as the Proton acceptor in the catalytic mechanism. 3 residues coordinate a divalent metal cation: glutamate 240, aspartate 241, and aspartate 264. Residues 297–300 (AGTA), asparagine 410, and asparagine 455 contribute to the NAD(+) site.

The protein belongs to the malic enzymes family. It depends on Mg(2+) as a cofactor. Mn(2+) is required as a cofactor.

The enzyme catalyses (S)-malate + NAD(+) = pyruvate + CO2 + NADH. It catalyses the reaction oxaloacetate + H(+) = pyruvate + CO2. In Mycobacterium tuberculosis (strain CDC 1551 / Oshkosh), this protein is Putative malate oxidoreductase [NAD] (mez).